The primary structure comprises 484 residues: Monocarboxylate transporter 2 (484 aa).

Over 1-16 (MPSETAVPPPHPIPPD) the chain is Cytoplasmic. Residues 17 to 37 (GGWGWVVVGAAFISIGFSYAF) traverse the membrane as a helical segment. The Extracellular segment spans residues 38 to 60 (PKAVTVFFKDIQQIFQASYSEIA). A helical transmembrane segment spans residues 61 to 81 (WISSIMLAVMYAGGPISSVLV). Topologically, residues 82–87 (NNYGSR) are cytoplasmic. A helical membrane pass occupies residues 88 to 108 (PVVIIGGLLCCTGMILASFSN). At 109–116 (SVLELYLT) the chain is on the extracellular side. The chain crosses the membrane as a helical span at residues 117–137 (IGFIGGLGLAFNLQPALTIIG). Topologically, residues 138–144 (KYFYRRR) are cytoplasmic. The helical transmembrane segment at 145–165 (PMANGLAMAGSPVFLSSLAPF) threads the bilayer. The Extracellular segment spans residues 166–174 (NQYLFNSYG). The chain crosses the membrane as a helical span at residues 175–195 (WKGSFLILGGIFLHSCVAGCL). Over 196–245 (MRPVQTSPRKSKSKSKVGSRQDGSMKKASKVSTAEKINRFLDFSLFKHRG) the chain is Cytoplasmic. The tract at residues 201–224 (TSPRKSKSKSKVGSRQDGSMKKAS) is disordered. Residues 246–266 (FLIYLSGNVIMFLGFFAPIIF) form a helical membrane-spanning segment. Over 267–282 (LAPYAKDKGVDEYNAA) the chain is Extracellular. Residues 283 to 303 (LLLSVMAFVDMFARPTGGLIA) form a helical membrane-spanning segment. Over 304 to 311 (NSKLIRPR) the chain is Cytoplasmic. Residues 312-332 (IQYFFSFAIVFTGICHLLCPL) form a helical membrane-spanning segment. Residues 333-337 (ADTYP) are Extracellular-facing. The helical transmembrane segment at 338 to 358 (ALVVYSIFFGYGFGSVSSVLF) threads the bilayer. The Cytoplasmic portion of the chain corresponds to 359 to 372 (ETLMDLVGPARFSS). The helical transmembrane segment at 373-393 (AVGLATIVECCPVLLGPPLAG) threads the bilayer. The Extracellular segment spans residues 394–405 (KLVDKTKDYKYM). The chain crosses the membrane as a helical span at residues 406–426 (YIASGTIVVISGIYLFIGNAI). At 427–484 (NYRLLAKERKREKARKKKSATHPSRESEALSRSKQDDVSVKVSNPHNSPSDRERESNI) the chain is on the cytoplasmic side. The interval 437-484 (REKARKKKSATHPSRESEALSRSKQDDVSVKVSNPHNSPSDRERESNI) is disordered. Composition is skewed to basic and acidic residues over residues 449–465 (PSRE…DDVS) and 475–484 (PSDRERESNI).

This sequence belongs to the major facilitator superfamily. Monocarboxylate porter (TC 2.A.1.13) family. Homodimer. Interacts with GRID2IP. Interacts with EMB; interaction mediates SLC16A7 targeting to the plasma membrane. Interacts with isoform 2 of BSG. As to expression, abundant on the surface of hepatocytes. Present on parietal cells of the oxyntic gland of the stomach, on the basolateral surface of epithelial cells in the collecting ducts of the kidney, on sperm tails throughout the epididymis. Expressed in mitochondria-rich skeletal muscle fibers and cardiac myocytes (at protein level).

The protein resides in the cell membrane. It localises to the basolateral cell membrane. It is found in the cytoplasm. The catalysed reaction is pyruvate(out) + H(+)(out) = pyruvate(in) + H(+)(in). The enzyme catalyses 3-methyl-2-oxobutanoate(out) + H(+)(out) = 3-methyl-2-oxobutanoate(in) + H(+)(in). It carries out the reaction (S)-lactate(in) + H(+)(in) = (S)-lactate(out) + H(+)(out). It catalyses the reaction acetoacetate(out) + H(+)(out) = acetoacetate(in) + H(+)(in). The catalysed reaction is (R)-3-hydroxybutanoate(out) + H(+)(out) = (R)-3-hydroxybutanoate(in) + H(+)(in). The enzyme catalyses 4-methyl-2-oxopentanoate(out) + H(+)(out) = 4-methyl-2-oxopentanoate(in) + H(+)(in). It carries out the reaction (S)-3-hydroxybutanoate(out) + H(+)(out) = (S)-3-hydroxybutanoate(in) + H(+)(in). With respect to regulation, transport activity exhibits steep dependence on substrate concentration. Substrate concentration sensitivity of SLC16A7 arises from the strong inter-subunit cooperativity of the SLC16A7 dimer during transport. Inhibited by AR-C155858. In terms of biological role, proton-coupled monocarboxylate symporter. Catalyzes the rapid transport across the plasma membrane of monocarboxylates such as L-lactate, pyruvate and ketone bodies, acetoacetate, beta-hydroxybutyrate and acetate. Dimerization is functionally required and both subunits work cooperatively in transporting substrate. This Mesocricetus auratus (Golden hamster) protein is Monocarboxylate transporter 2 (SLC16A7).